A 64-amino-acid polypeptide reads, in one-letter code: Translational regulator CsrA (64 aa).

It belongs to the CsrA/RsmA family. Homodimer; the beta-strands of each monomer intercalate to form a hydrophobic core, while the alpha-helices form wings that extend away from the core.

Its subcellular location is the cytoplasm. Functionally, a key translational regulator that binds mRNA to regulate translation initiation and/or mRNA stability. Mediates global changes in gene expression, shifting from rapid growth to stress survival by linking envelope stress, the stringent response and the catabolite repression systems. Usually binds in the 5'-UTR; binding at or near the Shine-Dalgarno sequence prevents ribosome-binding, repressing translation, binding elsewhere in the 5'-UTR can activate translation and/or stabilize the mRNA. Its function is antagonized by small RNA(s). The protein is Translational regulator CsrA of Dichelobacter nodosus (strain VCS1703A).